A 509-amino-acid polypeptide reads, in one-letter code: ATP synthase subunit alpha, mitochondrial (509 aa).

171–178 is an ATP binding site; it reads GDRQTGKT.

The protein belongs to the ATPase alpha/beta chains family. F-type ATPases have 2 components, CF(1) - the catalytic core - and CF(0) - the membrane proton channel. CF(1) has five subunits: alpha(3), beta(3), gamma(1), delta(1), epsilon(1). CF(0) has three main subunits: a, b and c.

It localises to the mitochondrion. It is found in the mitochondrion inner membrane. Functionally, mitochondrial membrane ATP synthase (F(1)F(0) ATP synthase or Complex V) produces ATP from ADP in the presence of a proton gradient across the membrane which is generated by electron transport complexes of the respiratory chain. F-type ATPases consist of two structural domains, F(1) - containing the extramembraneous catalytic core, and F(0) - containing the membrane proton channel, linked together by a central stalk and a peripheral stalk. During catalysis, ATP synthesis in the catalytic domain of F(1) is coupled via a rotary mechanism of the central stalk subunits to proton translocation. Subunits alpha and beta form the catalytic core in F(1). Rotation of the central stalk against the surrounding alpha(3)beta(3) subunits leads to hydrolysis of ATP in three separate catalytic sites on the beta subunits. Subunit alpha does not bear the catalytic high-affinity ATP-binding sites. In Nicotiana plumbaginifolia (Leadwort-leaved tobacco), this protein is ATP synthase subunit alpha, mitochondrial (ATPA).